Consider the following 369-residue polypeptide: Molybdenum import ATP-binding protein ModC 1 (369 aa).

In terms of domain architecture, ABC transporter spans 10 to 240 (KGYIEVAFNG…PALASRSEAA (231 aa)). 42–49 (GPPGCGKT) contacts ATP. One can recognise a Mop domain in the interval 297–367 (ASSILNVFRA…ELCGKLGDDG (71 aa)).

The protein belongs to the ABC transporter superfamily. Molybdate importer (TC 3.A.1.8) family. As to quaternary structure, the complex is composed of two ATP-binding proteins (ModC), two transmembrane proteins (ModB) and a solute-binding protein (ModA).

Its subcellular location is the cell inner membrane. The enzyme catalyses molybdate(out) + ATP + H2O = molybdate(in) + ADP + phosphate + H(+). Functionally, part of the ABC transporter complex ModABC involved in molybdenum import. Responsible for energy coupling to the transport system. The protein is Molybdenum import ATP-binding protein ModC 1 of Bradyrhizobium diazoefficiens (strain JCM 10833 / BCRC 13528 / IAM 13628 / NBRC 14792 / USDA 110).